A 400-amino-acid polypeptide reads, in one-letter code: Queuine tRNA-ribosyltransferase catalytic subunit 1 (400 aa).

Asp-103 acts as the Proton acceptor in catalysis. Queuine is bound by residues 103-107, Asp-157, Gln-200, and Gly-227; that span reads DSGGF. The segment at 258–264 is RNA binding; sequence GVGYAVD. Asp-277 (nucleophile) is an active-site residue. The segment at 282-286 is RNA binding; important for wobble base 34 recognition; the sequence is TRTAR. Positions 315, 317, 320, and 345 each coordinate Zn(2+).

Belongs to the queuine tRNA-ribosyltransferase family. As to quaternary structure, heterodimer of a catalytic subunit qtrt1 and an accessory subunit qtrt2. Zn(2+) serves as cofactor.

The protein resides in the cytoplasm. Its subcellular location is the mitochondrion outer membrane. It carries out the reaction guanosine(34) in tRNA + queuine = queuosine(34) in tRNA + guanine. Functionally, catalytic subunit of the queuine tRNA-ribosyltransferase (TGT) that catalyzes the base-exchange of a guanine (G) residue with queuine (Q) at position 34 (anticodon wobble position) in tRNAs with GU(N) anticodons (tRNA-Asp, -Asn, -His and -Tyr), resulting in the hypermodified nucleoside queuosine (7-(((4,5-cis-dihydroxy-2-cyclopenten-1-yl)amino)methyl)-7-deazaguanosine). Catalysis occurs through a double-displacement mechanism. The nucleophile active site attacks the C1' of nucleotide 34 to detach the guanine base from the RNA, forming a covalent enzyme-RNA intermediate. The proton acceptor active site deprotonates the incoming queuine, allowing a nucleophilic attack on the C1' of the ribose to form the product. This is Queuine tRNA-ribosyltransferase catalytic subunit 1 from Danio rerio (Zebrafish).